The sequence spans 436 residues: Protein TolB homolog (436 aa).

The signal sequence occupies residues methionine 1 to alanine 27.

Belongs to the TolB family.

The protein localises to the periplasm. The protein is Protein TolB homolog of Chlorobium luteolum (strain DSM 273 / BCRC 81028 / 2530) (Pelodictyon luteolum).